The primary structure comprises 530 residues: Ubiquitin carboxyl-terminal hydrolase 17-like protein 13 (530 aa).

A USP domain is found at 80–375 (AGLQNMGNTC…QAYVLFYIQK (296 aa)). Cysteine 89 acts as the Nucleophile in catalysis. Histidine 334 acts as the Proton acceptor in catalysis. 2 stretches are compositionally biased toward basic and acidic residues: residues 382–392 (SESVSRGREPR) and 398–412 (DTDR…KRDH). Disordered regions lie at residues 382-412 (SESV…KRDH) and 477-530 (NHHP…LVCQ). The segment covering 493-505 (TPTHQESMNTGTL) has biased composition (polar residues). Residues 510-524 (GRARRSKGKNKHSKR) show a composition bias toward basic residues.

It belongs to the peptidase C19 family. USP17 subfamily.

It is found in the nucleus. The protein resides in the endoplasmic reticulum. It carries out the reaction Thiol-dependent hydrolysis of ester, thioester, amide, peptide and isopeptide bonds formed by the C-terminal Gly of ubiquitin (a 76-residue protein attached to proteins as an intracellular targeting signal).. Its function is as follows. Deubiquitinating enzyme that removes conjugated ubiquitin from specific proteins to regulate different cellular processes that may include cell proliferation, progression through the cell cycle, apoptosis, cell migration, and the cellular response to viral infection. This is Ubiquitin carboxyl-terminal hydrolase 17-like protein 13 (USP17L13) from Homo sapiens (Human).